The chain runs to 393 residues: Protein FAM53C (393 aa).

An N-acetylmethionine modification is found at M1. The disordered stretch occupies residues 77–120 (HLRPPSRGNSPKEPPLSQVLSPEPPDPEKLPVPPAPPSKRHCRS). Residues S122 and S162 each carry the phosphoserine modification. 2 disordered regions span residues 141-167 (LWTP…PKRV) and 204-283 (QPCA…ARKT). Over residues 204–215 (QPCATSPQSGSW) the composition is skewed to polar residues. Phosphoserine is present on residues S232, S234, S255, S273, and S299. Low complexity predominate over residues 241 to 256 (ASRFLPSARSSPASSP). Positions 343-355 (SCSPVEGSSQVLS) are enriched in low complexity. The tract at residues 343 to 365 (SCSPVEGSSQVLSESEEEEEGSV) is disordered.

It belongs to the FAM53 family.

The sequence is that of Protein FAM53C from Mus musculus (Mouse).